A 61-amino-acid polypeptide reads, in one-letter code: MLPQHSDIEIAWYASIQQEPNGWKTVTTQFYIQEFSEYIAPLQDAVDLEIATEEERSLLEA.

It belongs to the tfa family.

Its function is as follows. Might play a role in cell growth during glycolysis. The sequence is that of Protein TfaX (tfaX) from Escherichia coli (strain K12).